The primary structure comprises 545 residues: ATP synthase subunit alpha (545 aa).

Residue glycine 173–threonine 180 coordinates ATP.

The protein belongs to the ATPase alpha/beta chains family. As to quaternary structure, F-type ATPases have 2 components, CF(1) - the catalytic core - and CF(0) - the membrane proton channel. CF(1) has five subunits: alpha(3), beta(3), gamma(1), delta(1), epsilon(1). CF(0) has three main subunits: a(1), b(2) and c(9-12). The alpha and beta chains form an alternating ring which encloses part of the gamma chain. CF(1) is attached to CF(0) by a central stalk formed by the gamma and epsilon chains, while a peripheral stalk is formed by the delta and b chains.

It is found in the cell membrane. The catalysed reaction is ATP + H2O + 4 H(+)(in) = ADP + phosphate + 5 H(+)(out). In terms of biological role, produces ATP from ADP in the presence of a proton gradient across the membrane. The alpha chain is a regulatory subunit. The chain is ATP synthase subunit alpha from Renibacterium salmoninarum (strain ATCC 33209 / DSM 20767 / JCM 11484 / NBRC 15589 / NCIMB 2235).